We begin with the raw amino-acid sequence, 85 residues long: Large ribosomal subunit protein bL27 (85 aa).

A disordered region spans residues 1–21 (MAHKKAAGSTKNGRDSNAKRL).

The protein belongs to the bacterial ribosomal protein bL27 family.

The protein is Large ribosomal subunit protein bL27 of Hydrogenovibrio crunogenus (strain DSM 25203 / XCL-2) (Thiomicrospira crunogena).